The sequence spans 140 residues: Translation initiation factor 2 subunit beta (140 aa).

This sequence belongs to the eIF-2-beta/eIF-5 family. Heterotrimer composed of an alpha, a beta and a gamma chain.

Functionally, eIF-2 functions in the early steps of protein synthesis by forming a ternary complex with GTP and initiator tRNA. The sequence is that of Translation initiation factor 2 subunit beta from Metallosphaera sedula (strain ATCC 51363 / DSM 5348 / JCM 9185 / NBRC 15509 / TH2).